Reading from the N-terminus, the 464-residue chain is Sushi-repeat-containing protein SRPX (464 aa).

The N-terminal stretch at 1 to 30 (MGSPGLRPELLLPQVLPLLLALLHVLPSQG) is a signal peptide. Ser-34 is a glycosylation site (O-linked (Xyl...) (chondroitin sulfate) serine). Cystine bridges form between Cys-57–Cys-85, Cys-69–Cys-103, Cys-89–Cys-115, Cys-120–Cys-161, and Cys-147–Cys-174. 2 consecutive Sushi domains span residues 57-117 (CSPI…ICKQ) and 118-176 (KRCP…SCVD). The HYR domain maps to 177-259 (LEPPRIKCPS…TCKFRVKVRV (83 aa)). A Sushi 3 domain is found at 260 to 319 (RRCGKLNAPENGYMKCSSDGDNYGATCEFSCIGGYELQGSPARVCQSNLAWSGTEPSCAA). 2 cysteine pairs are disulfide-bonded: Cys-262–Cys-304 and Cys-290–Cys-317.

The chain is Sushi-repeat-containing protein SRPX (Srpx) from Mus musculus (Mouse).